Reading from the N-terminus, the 392-residue chain is Probable myosin light chain kinase DDB_G0271550 (392 aa).

Residues 20–278 (YEFGPEIGRG…ASQCIKHPWL (259 aa)) enclose the Protein kinase domain. ATP-binding positions include 26–34 (IGRGAFSIV) and lysine 49. The active-site Proton acceptor is aspartate 142. The segment covering 317 to 326 (SQSTPNLHSA) has biased composition (polar residues). The tract at residues 317–392 (SQSTPNLHSA…NNNNNNNNNI (76 aa)) is disordered. Over residues 327–392 (NSNTNTNSLS…NNNNNNNNNI (66 aa)) the composition is skewed to low complexity.

Belongs to the protein kinase superfamily. CAMK Ser/Thr protein kinase family. CaMK subfamily.

The catalysed reaction is L-seryl-[myosin light chain] + ATP = O-phospho-L-seryl-[myosin light chain] + ADP + H(+). It carries out the reaction L-threonyl-[myosin light chain] + ATP = O-phospho-L-threonyl-[myosin light chain] + ADP + H(+). Functionally, may phosphorylate a specific serine in the N-terminus of a myosin light chain. This Dictyostelium discoideum (Social amoeba) protein is Probable myosin light chain kinase DDB_G0271550.